The chain runs to 352 residues: Rhodopsin (352 aa).

At 1 to 36 (MNGTEGPFFYIPMVNTTGIVRSPYEYPQYYLVNPAA) the chain is on the extracellular side. Residues Asn-2 and Asn-15 are each glycosylated (N-linked (GlcNAc...) asparagine). Residues 37-61 (YAALGAYMFFLILTGFPINFLTLYV) traverse the membrane as a helical segment. Topologically, residues 62–73 (TLEHKKLRTALN) are cytoplasmic. The helical transmembrane segment at 74–96 (LILLNLAVADLFMVFGGFTTTMY) threads the bilayer. The Extracellular segment spans residues 97–110 (TSMHGYFVLGRLGC). Cysteines 110 and 187 form a disulfide. Residues 111–133 (NVEGFFATLGGEIALWSLVVLAV) traverse the membrane as a helical segment. The 'Ionic lock' involved in activated form stabilization motif lies at 134–136 (ERW). The Cytoplasmic segment spans residues 134 to 152 (ERWVVVCKPISNFRFTENH). Residues 153–173 (AIMGVAFSWIMAATCAVPPLV) traverse the membrane as a helical segment. The Extracellular segment spans residues 174–202 (GWSRYIPEGMQCSCGVDYYTRAEGFNNES). A helical membrane pass occupies residues 203 to 224 (FVIYMFIVHFLAPLIVIFFCYG). Topologically, residues 225–252 (RLLCAVKEAAAAQQESETTQRAEREVTR) are cytoplasmic. The helical transmembrane segment at 253-274 (MVIIMVIGFLTSWLPYASVAWY) threads the bilayer. Residues 275–286 (IFTHQGTEFGPL) are Extracellular-facing. The chain crosses the membrane as a helical span at residues 287–308 (FMTIPAFFAKSSALYNPMIYIC). An N6-(retinylidene)lysine modification is found at Lys-296. At 309–352 (MNKQFRHCMITTLCCGKNPFEEEEGASTTKTEASSVSSSSVSPA) the chain is on the cytoplasmic side. S-palmitoyl cysteine attachment occurs at residues Cys-322 and Cys-323. The tract at residues 331–352 (EEGASTTKTEASSVSSSSVSPA) is disordered. A compositionally biased stretch (low complexity) spans 342–352 (SSVSSSSVSPA).

It belongs to the G-protein coupled receptor 1 family. Opsin subfamily. Post-translationally, phosphorylated on some or all of the serine and threonine residues present in the C-terminal region. In terms of processing, contains one covalently linked retinal chromophore.

It localises to the membrane. The protein resides in the cell projection. Its subcellular location is the cilium. The protein localises to the photoreceptor outer segment. Its function is as follows. Photoreceptor required for image-forming vision at low light intensity. While most salt water fish species use retinal as chromophore, most freshwater fish use 3-dehydroretinal, or a mixture of retinal and 3-dehydroretinal. Light-induced isomerization of 11-cis to all-trans retinal triggers a conformational change that activates signaling via G-proteins. Subsequent receptor phosphorylation mediates displacement of the bound G-protein alpha subunit by arrestin and terminates signaling. This is Rhodopsin (rho) from Pomatoschistus minutus (Sand goby).